A 129-amino-acid polypeptide reads, in one-letter code: Large ribosomal subunit protein uL22 (129 aa).

The protein belongs to the universal ribosomal protein uL22 family. In terms of assembly, part of the 50S ribosomal subunit.

This protein binds specifically to 23S rRNA; its binding is stimulated by other ribosomal proteins, e.g. L4, L17, and L20. It is important during the early stages of 50S assembly. It makes multiple contacts with different domains of the 23S rRNA in the assembled 50S subunit and ribosome. Functionally, the globular domain of the protein is located near the polypeptide exit tunnel on the outside of the subunit, while an extended beta-hairpin is found that lines the wall of the exit tunnel in the center of the 70S ribosome. The chain is Large ribosomal subunit protein uL22 from Bartonella henselae (strain ATCC 49882 / DSM 28221 / CCUG 30454 / Houston 1) (Rochalimaea henselae).